A 153-amino-acid polypeptide reads, in one-letter code: ORM1-like protein 3 (153 aa).

Residues 1–21 (MNVGTAHSEVNPNTRVMNSRG) are Cytoplasmic-facing. Helical transmembrane passes span 22-42 (IWLSYVLGIGLLHIILLSIPF) and 43-63 (VSVPVVWTLTNLIHNMCMYIF). At 64 to 94 (LHTVKGTPFETPDQGKARLLTHWEQMDYGVQ) the chain is on the cytoplasmic side. The chain crosses the membrane as a helical span at residues 95–117 (FTASRKFLTITPIILYFLTSFYT). Topologically, residues 118 to 121 (KYDR) are extracellular. Residues 122-142 (VHFVINTISLLTVLIPKLPQF) form a helical membrane-spanning segment. Proline 137 carries the hydroxyproline modification. Over 143–153 (HGVRLFGINKY) the chain is Cytoplasmic.

It belongs to the ORM family. Ceramide-sensitive subunit of the serine palmitoyltransferase (SPT) complex, which is also composed of SPTLC1, SPTLC2/3 and SPTSSA/B. In terms of processing, when hydroxylated at Pro-137, ubiquitinated via 'Lys-48'-linkage, leading to proteasomal degradation. In endothelial cells, ORMDL3 proteasomal degradation is controlled by the sphingosine 1-phosphate receptor signaling pathway.

The protein resides in the endoplasmic reticulum membrane. Functionally, plays an essential role in the homeostatic regulation of sphingolipid de novo biosynthesis by modulating the activity of the serine palmitoyltransferase (SPT) in response to ceramide levels. When complexed to SPT, the binding of ceramides to its N-terminus stabilizes a conformation that block SPT substrate entry, hence preventing SPT catalytic activity. Through this mechanism, maintains ceramide levels at sufficient concentrations for the production of complex sphingolipids, but which prevents the accumulation of ceramides to levels that trigger apoptosis. The chain is ORM1-like protein 3 (ormdl3) from Danio rerio (Zebrafish).